A 120-amino-acid polypeptide reads, in one-letter code: FK506-binding protein 1A (120 aa).

The PPIase FKBP-type domain maps to 26–114 (GDNVDVHYKG…IFETELVGIK (89 aa)).

This sequence belongs to the FKBP-type PPIase family. FKBP1 subfamily.

The protein localises to the cytoplasm. The catalysed reaction is [protein]-peptidylproline (omega=180) = [protein]-peptidylproline (omega=0). Its function is as follows. PPIases accelerate the folding of proteins. It catalyzes the cis-trans isomerization of proline imidic peptide bonds in oligopeptides. The sequence is that of FK506-binding protein 1A (fkr-2) from Neurospora crassa (strain ATCC 24698 / 74-OR23-1A / CBS 708.71 / DSM 1257 / FGSC 987).